The primary structure comprises 295 residues: Ribosomal RNA small subunit methyltransferase A (295 aa).

Positions 31, 33, 58, 79, 104, and 129 each coordinate S-adenosyl-L-methionine.

This sequence belongs to the class I-like SAM-binding methyltransferase superfamily. rRNA adenine N(6)-methyltransferase family. RsmA subfamily.

The protein localises to the cytoplasm. The catalysed reaction is adenosine(1518)/adenosine(1519) in 16S rRNA + 4 S-adenosyl-L-methionine = N(6)-dimethyladenosine(1518)/N(6)-dimethyladenosine(1519) in 16S rRNA + 4 S-adenosyl-L-homocysteine + 4 H(+). Specifically dimethylates two adjacent adenosines (A1518 and A1519) in the loop of a conserved hairpin near the 3'-end of 16S rRNA in the 30S particle. May play a critical role in biogenesis of 30S subunits. The chain is Ribosomal RNA small subunit methyltransferase A from Leuconostoc mesenteroides subsp. mesenteroides (strain ATCC 8293 / DSM 20343 / BCRC 11652 / CCM 1803 / JCM 6124 / NCDO 523 / NBRC 100496 / NCIMB 8023 / NCTC 12954 / NRRL B-1118 / 37Y).